The following is a 179-amino-acid chain: Isopentenyl-diphosphate Delta-isomerase (179 aa).

Mn(2+) is bound by residues H24 and H30. Residues 28 to 160 form the Nudix hydrolase domain; sequence LLHRAFSIFI…PEKFTVWFLT (133 aa). C65 is an active-site residue. H67 contributes to the Mn(2+) binding site. E85 is a Mg(2+) binding site. Positions 110 and 112 each coordinate Mn(2+). E112 is a catalytic residue.

It belongs to the IPP isomerase type 1 family. In terms of assembly, homodimer. It depends on Mg(2+) as a cofactor. The cofactor is Mn(2+).

It is found in the cytoplasm. It carries out the reaction isopentenyl diphosphate = dimethylallyl diphosphate. It participates in isoprenoid biosynthesis; dimethylallyl diphosphate biosynthesis; dimethylallyl diphosphate from isopentenyl diphosphate: step 1/1. In terms of biological role, catalyzes the 1,3-allylic rearrangement of the homoallylic substrate isopentenyl (IPP) to its highly electrophilic allylic isomer, dimethylallyl diphosphate (DMAPP). The chain is Isopentenyl-diphosphate Delta-isomerase from Serratia proteamaculans (strain 568).